The following is a 554-amino-acid chain: Chaperonin GroEL (554 aa).

ATP is bound by residues 30-33 (TLGP), Lys-51, 87-91 (DGTTT), Gly-415, 478-480 (DAA), and Asp-494.

Belongs to the chaperonin (HSP60) family. As to quaternary structure, forms a cylinder of 14 subunits composed of two heptameric rings stacked back-to-back. Interacts with the co-chaperonin GroES.

It localises to the cytoplasm. The enzyme catalyses ATP + H2O + a folded polypeptide = ADP + phosphate + an unfolded polypeptide.. Its function is as follows. Together with its co-chaperonin GroES, plays an essential role in assisting protein folding. The GroEL-GroES system forms a nano-cage that allows encapsulation of the non-native substrate proteins and provides a physical environment optimized to promote and accelerate protein folding. The polypeptide is Chaperonin GroEL (Pelobacter propionicus (strain DSM 2379 / NBRC 103807 / OttBd1)).